The following is a 360-amino-acid chain: MTALDTLRGKYIEAISSAADEAALEEVRLAALGKKGEISLKMRELGQMSPEERQTTGAALNRLRDEIDASLRARKQGLADAALDARLKTEWLDVTLPGRPRRAGTIHPVSQVMAELTAIFADMGFAVAEGPQVESDWFNFDALNIPPEHPARQEHDTFFMARAEGDDRPPHVLRTHTSPVQIRAMQAQGAPIRVIAPGRVYRMDMDQTHTPMFHQVEGLAIDRDISMANLKWVLEEFCRAFFEVPSVELRFRASHFPFTEPSAEVDIRCSWEGGQLRIGEGDGWLEILGSGMVHPKVLAAAGVNPDEWQGFAFGMGIDRIAMLKYGIPDLRAFFESDLRWLRHYGFAALDMPDLAGGLSR.

Glu260 contributes to the Mg(2+) binding site.

Belongs to the class-II aminoacyl-tRNA synthetase family. Phe-tRNA synthetase alpha subunit type 1 subfamily. Tetramer of two alpha and two beta subunits. Mg(2+) serves as cofactor.

It is found in the cytoplasm. It catalyses the reaction tRNA(Phe) + L-phenylalanine + ATP = L-phenylalanyl-tRNA(Phe) + AMP + diphosphate + H(+). The polypeptide is Phenylalanine--tRNA ligase alpha subunit (Cereibacter sphaeroides (strain ATCC 17029 / ATH 2.4.9) (Rhodobacter sphaeroides)).